Reading from the N-terminus, the 335-residue chain is Glutamyl-tRNA reductase (335 aa).

Substrate is bound by residues 60-63, Ser-110, 115-117, and Gln-121; these read TCHR and ETE. Cys-61 (nucleophile) is an active-site residue. Residue 189-194 participates in NADP(+) binding; it reads GYSEIN.

It belongs to the glutamyl-tRNA reductase family. As to quaternary structure, homodimer.

The enzyme catalyses (S)-4-amino-5-oxopentanoate + tRNA(Glu) + NADP(+) = L-glutamyl-tRNA(Glu) + NADPH + H(+). Its pathway is porphyrin-containing compound metabolism; protoporphyrin-IX biosynthesis; 5-aminolevulinate from L-glutamyl-tRNA(Glu): step 1/2. Catalyzes the NADPH-dependent reduction of glutamyl-tRNA(Glu) to glutamate 1-semialdehyde (GSA). This Chlamydia trachomatis serovar L2 (strain ATCC VR-902B / DSM 19102 / 434/Bu) protein is Glutamyl-tRNA reductase.